The chain runs to 404 residues: Formate-dependent phosphoribosylglycinamide formyltransferase (404 aa).

N(1)-(5-phospho-beta-D-ribosyl)glycinamide is bound by residues 25-26 (EL) and E85. Residues R118, K159, 164 to 169 (SSGKGQ), 199 to 202 (EGFI), and E207 contribute to the ATP site. In terms of domain architecture, ATP-grasp spans 123-318 (RLAAEELGLP…EFELHARAIL (196 aa)). E277 and E289 together coordinate Mg(2+). Residues D296, K365, and 372–373 (RR) each bind N(1)-(5-phospho-beta-D-ribosyl)glycinamide.

Belongs to the PurK/PurT family. Homodimer.

It carries out the reaction N(1)-(5-phospho-beta-D-ribosyl)glycinamide + formate + ATP = N(2)-formyl-N(1)-(5-phospho-beta-D-ribosyl)glycinamide + ADP + phosphate + H(+). Its pathway is purine metabolism; IMP biosynthesis via de novo pathway; N(2)-formyl-N(1)-(5-phospho-D-ribosyl)glycinamide from N(1)-(5-phospho-D-ribosyl)glycinamide (formate route): step 1/1. In terms of biological role, involved in the de novo purine biosynthesis. Catalyzes the transfer of formate to 5-phospho-ribosyl-glycinamide (GAR), producing 5-phospho-ribosyl-N-formylglycinamide (FGAR). Formate is provided by PurU via hydrolysis of 10-formyl-tetrahydrofolate. This chain is Formate-dependent phosphoribosylglycinamide formyltransferase, found in Burkholderia pseudomallei (strain 1106a).